Consider the following 483-residue polypeptide: tRNA sulfurtransferase (483 aa).

A THUMP domain is found at 62-166 (PEICDALTRI…QDKLILVKAR (105 aa)). ATP contacts are provided by residues 184-185 (LI), Lys266, Gly288, and Gln297. A disulfide bond links Cys345 and Cys457. The 79-residue stretch at 405-483 (LADTDVLLDI…GYTNVKVYRP (79 aa)) folds into the Rhodanese domain. Cys457 acts as the Cysteine persulfide intermediate in catalysis.

This sequence belongs to the ThiI family.

Its subcellular location is the cytoplasm. The catalysed reaction is [ThiI sulfur-carrier protein]-S-sulfanyl-L-cysteine + a uridine in tRNA + 2 reduced [2Fe-2S]-[ferredoxin] + ATP + H(+) = [ThiI sulfur-carrier protein]-L-cysteine + a 4-thiouridine in tRNA + 2 oxidized [2Fe-2S]-[ferredoxin] + AMP + diphosphate. It catalyses the reaction [ThiS sulfur-carrier protein]-C-terminal Gly-Gly-AMP + S-sulfanyl-L-cysteinyl-[cysteine desulfurase] + AH2 = [ThiS sulfur-carrier protein]-C-terminal-Gly-aminoethanethioate + L-cysteinyl-[cysteine desulfurase] + A + AMP + 2 H(+). Its pathway is cofactor biosynthesis; thiamine diphosphate biosynthesis. Catalyzes the ATP-dependent transfer of a sulfur to tRNA to produce 4-thiouridine in position 8 of tRNAs, which functions as a near-UV photosensor. Also catalyzes the transfer of sulfur to the sulfur carrier protein ThiS, forming ThiS-thiocarboxylate. This is a step in the synthesis of thiazole, in the thiamine biosynthesis pathway. The sulfur is donated as persulfide by IscS. The chain is tRNA sulfurtransferase from Yersinia pseudotuberculosis serotype O:1b (strain IP 31758).